Consider the following 630-residue polypeptide: Transposase B from transposon Tn554 (630 aa).

One can recognise a Core-binding (CB) domain in the interval 216 to 302 (TYFKQLVKRY…ILEGLFSTLL (87 aa)). Residues 326 to 513 (AKPRFIDEFV…FDETLKNEFT (188 aa)) enclose the Tyr recombinase domain. Catalysis depends on residues R363, K391, H465, R468, and H491. Y500 acts as the O-(3'-phospho-DNA)-tyrosine intermediate in catalysis.

It belongs to the 'phage' integrase family.

Its function is as follows. One of three proteins encoded by transposon Tn554 required for its transposition. This Staphylococcus aureus (strain Mu50 / ATCC 700699) protein is Transposase B from transposon Tn554 (tnpB1).